A 490-amino-acid polypeptide reads, in one-letter code: Tryptophan 5-hydroxylase 2 (490 aa).

Phosphoserine is present on Ser-19. The interval 34–62 is disordered; the sequence is LTLNKANSGKNDDKGNKGSSKNETATESG. Positions 50–62 are enriched in polar residues; it reads KGSSKNETATESG. Positions 65–140 constitute an ACT domain; it reads AVVFSLKNEV…TIVTLNPPEN (76 aa). The Fe cation site is built by His-318, His-323, and Glu-363.

Belongs to the biopterin-dependent aromatic amino acid hydroxylase family. As to quaternary structure, interacts with DNAJC12. The cofactor is Fe(2+).

The enzyme catalyses (6R)-L-erythro-5,6,7,8-tetrahydrobiopterin + L-tryptophan + O2 = 5-hydroxy-L-tryptophan + (4aS,6R)-4a-hydroxy-L-erythro-5,6,7,8-tetrahydrobiopterin. The protein operates within aromatic compound metabolism; serotonin biosynthesis; serotonin from L-tryptophan: step 1/2. This is Tryptophan 5-hydroxylase 2 (TPH2) from Macaca mulatta (Rhesus macaque).